Here is a 248-residue protein sequence, read N- to C-terminus: Triosephosphate isomerase (248 aa).

9–11 (NWK) serves as a coordination point for substrate. H94 functions as the Electrophile in the catalytic mechanism. Residue E166 is the Proton acceptor of the active site. Substrate is bound by residues G172, S211, and 232-233 (GG).

Belongs to the triosephosphate isomerase family. Homodimer.

The protein resides in the cytoplasm. The enzyme catalyses D-glyceraldehyde 3-phosphate = dihydroxyacetone phosphate. The protein operates within carbohydrate biosynthesis; gluconeogenesis. It participates in carbohydrate degradation; glycolysis; D-glyceraldehyde 3-phosphate from glycerone phosphate: step 1/1. Functionally, involved in the gluconeogenesis. Catalyzes stereospecifically the conversion of dihydroxyacetone phosphate (DHAP) to D-glyceraldehyde-3-phosphate (G3P). This is Triosephosphate isomerase from Herminiimonas arsenicoxydans.